A 196-amino-acid chain; its full sequence is DnaA initiator-associating protein DiaA (196 aa).

In terms of domain architecture, SIS spans 34 to 196 (MVQSLLNGNK…DNTLFPHQDD (163 aa)).

The protein belongs to the SIS family. DiaA subfamily. Homotetramer; dimer of dimers.

Functionally, required for the timely initiation of chromosomal replication via direct interactions with the DnaA initiator protein. This chain is DnaA initiator-associating protein DiaA, found in Photorhabdus laumondii subsp. laumondii (strain DSM 15139 / CIP 105565 / TT01) (Photorhabdus luminescens subsp. laumondii).